Here is a 396-residue protein sequence, read N- to C-terminus: Pyruvate synthase subunit PorA (396 aa).

In terms of assembly, heterotetramer of one alpha, one beta, one delta and one gamma chain.

The catalysed reaction is 2 oxidized [2Fe-2S]-[ferredoxin] + pyruvate + CoA = 2 reduced [2Fe-2S]-[ferredoxin] + acetyl-CoA + CO2 + H(+). The chain is Pyruvate synthase subunit PorA (porA) from Pyrococcus furiosus (strain ATCC 43587 / DSM 3638 / JCM 8422 / Vc1).